The chain runs to 156 residues: ATP synthase subunit b (156 aa).

The chain crosses the membrane as a helical span at residues 7 to 27 (LIGQTVAFIIFVWFCMKFVWP).

It belongs to the ATPase B chain family. As to quaternary structure, F-type ATPases have 2 components, F(1) - the catalytic core - and F(0) - the membrane proton channel. F(1) has five subunits: alpha(3), beta(3), gamma(1), delta(1), epsilon(1). F(0) has three main subunits: a(1), b(2) and c(10-14). The alpha and beta chains form an alternating ring which encloses part of the gamma chain. F(1) is attached to F(0) by a central stalk formed by the gamma and epsilon chains, while a peripheral stalk is formed by the delta and b chains.

It is found in the cell inner membrane. In terms of biological role, f(1)F(0) ATP synthase produces ATP from ADP in the presence of a proton or sodium gradient. F-type ATPases consist of two structural domains, F(1) containing the extramembraneous catalytic core and F(0) containing the membrane proton channel, linked together by a central stalk and a peripheral stalk. During catalysis, ATP synthesis in the catalytic domain of F(1) is coupled via a rotary mechanism of the central stalk subunits to proton translocation. Component of the F(0) channel, it forms part of the peripheral stalk, linking F(1) to F(0). This is ATP synthase subunit b from Shewanella baltica (strain OS155 / ATCC BAA-1091).